The following is a 450-amino-acid chain: UDP-N-acetylmuramoylalanine--D-glutamate ligase (450 aa).

118–124 (GSNAKST) is an ATP binding site.

The protein belongs to the MurCDEF family.

Its subcellular location is the cytoplasm. The enzyme catalyses UDP-N-acetyl-alpha-D-muramoyl-L-alanine + D-glutamate + ATP = UDP-N-acetyl-alpha-D-muramoyl-L-alanyl-D-glutamate + ADP + phosphate + H(+). It functions in the pathway cell wall biogenesis; peptidoglycan biosynthesis. Its function is as follows. Cell wall formation. Catalyzes the addition of glutamate to the nucleotide precursor UDP-N-acetylmuramoyl-L-alanine (UMA). In Pseudomonas putida (strain ATCC 47054 / DSM 6125 / CFBP 8728 / NCIMB 11950 / KT2440), this protein is UDP-N-acetylmuramoylalanine--D-glutamate ligase.